The sequence spans 217 residues: Large ribosomal subunit protein uL1 (217 aa).

It belongs to the universal ribosomal protein uL1 family. As to quaternary structure, component of the large ribosomal subunit.

It is found in the cytoplasm. Functionally, component of the large ribosomal subunit. The ribosome is a large ribonucleoprotein complex responsible for the synthesis of proteins in the cell. The polypeptide is Large ribosomal subunit protein uL1 (rpl10a) (Xenopus laevis (African clawed frog)).